The chain runs to 230 residues: Cytidylate kinase (230 aa).

An ATP-binding site is contributed by 16–24 (GPASAGKST).

This sequence belongs to the cytidylate kinase family. Type 1 subfamily.

Its subcellular location is the cytoplasm. The catalysed reaction is CMP + ATP = CDP + ADP. It carries out the reaction dCMP + ATP = dCDP + ADP. The protein is Cytidylate kinase of Lactobacillus johnsonii (strain CNCM I-12250 / La1 / NCC 533).